The sequence spans 259 residues: Bis(5'-nucleosyl)-tetraphosphatase, symmetrical (259 aa).

It belongs to the Ap4A hydrolase family.

The catalysed reaction is P(1),P(4)-bis(5'-adenosyl) tetraphosphate + H2O = 2 ADP + 2 H(+). Functionally, hydrolyzes diadenosine 5',5'''-P1,P4-tetraphosphate to yield ADP. This chain is Bis(5'-nucleosyl)-tetraphosphatase, symmetrical (apaH), found in Klebsiella aerogenes (Enterobacter aerogenes).